The sequence spans 184 residues: Guanylate kinase (184 aa).

Residues 4-182 (MGLTVLSGPS…AAARLVALMI (179 aa)) form the Guanylate kinase-like domain. Position 11–18 (11–18 (GPSGVGKD)) interacts with ATP.

This sequence belongs to the guanylate kinase family.

The protein resides in the cytoplasm. It catalyses the reaction GMP + ATP = GDP + ADP. Essential for recycling GMP and indirectly, cGMP. This Frankia casuarinae (strain DSM 45818 / CECT 9043 / HFP020203 / CcI3) protein is Guanylate kinase.